Here is a 1179-residue protein sequence, read N- to C-terminus: MVWCLGLAVLSLVISQGADGRGKPEVVSVVGRAGESVVLGCDLLPPAGRPPLHVIEWLRFGFLLPIFIQFGLYSPRIDPDYVGRVRLQKGASLQIEGLRVEDQGWYECRVFFLDQHIPEDDFANGSWVHLTVNSPPQFQETPPAVLEVQELEPVTLRCVARGSPLPHVTWKLRGKDLGQGQGQVQVQNGTLRIRRVERGSSGVYTCQASSTEGSATHATQLLVLGPPVIVVPPKNSTVNASQDVSLACHAEAYPANLTYSWFQDNINVFHISRLQPRVRILVDGSLRLLATQPDDAGCYTCVPSNGLLHPPSASAYLTVLYPAQVTAMPPETPLPIGMPGVIRCPVRANPPLLFVSWTKDGKALQLDKFPGWSQGTEGSLIIALGNEDALGEYSCTPYNSLGTAGPSPVTRVLLKAPPAFIERPKEEYFQEVGRELLIPCSAQGDPPPVVSWTKVGRGLQGQAQVDSNSSLILRPLTKEAHGHWECSASNAVARVATSTNVYVLGTSPHVVTNVSVVALPKGANVSWEPGFDGGYLQRFSVWYTPLAKRPDRMHHDWVSLAVPVGAAHLLVPGLQPHTQYQFSVLAQNKLGSGPFSEIVLSAPEGLPTTPAAPGLPPTEIPPPLSPPRGLVAVRTPRGVLLHWDPPELVPKRLDGYVLEGRQGSQGWEVLDPAVAGTETELLVPGLIKDVLYEFRLVAFAGSFVSDPSNTANVSTSGLEVYPSRTQLPGLLPQPVLAGVVGGVCFLGVAVLVSILAGCLLNRRRAARRRRKRLRQDPPLIFSPTGKSAAPSALGSGSPDSVAKLKLQGSPVPSLRQSLLWGDPAGTPSPHPDPPSSRGPLPLEPICRGPDGRFVMGPTVAAPQERSGREQAEPRTPAQRLARSFDCSSSSPSGAPQPLCIEDISPVAPPPAAPPSPLPGPGPLLQYLSLPFFREMNVDGDWPPLEEPSPAAPPDYMDTRRCPTSSFLRSPETPPVSPRESLPGAVVGAGATAEPPYTALADWTLRERLLPGLLPAAPRGSLTSQSSGRGSASFLRPPSTAPSAGGSYLSPAPGDTSSWASGPERWPRREHVVTVSKRRNTSVDENYEWDSEFPGDMELLETLHLGLASSRLRPEAEPELGVKTPEEGCLLNTAHVTGPEARCAALREEFLAFRRRRDATRARLPAYRQPVPHPEQATLL.

An N-terminal signal peptide occupies residues 1–20 (MVWCLGLAVLSLVISQGADG). Over 21 to 734 (RGKPEVVSVV…TQLPGLLPQP (714 aa)) the chain is Extracellular. Ig-like domains are found at residues 24 to 124 (PEVV…DFAN), 136 to 216 (PQFQ…GSAT), 226 to 318 (PPVI…AYLT), 322 to 410 (PAQV…SPVT), and 418 to 502 (PAFI…TNVY). 5 disulfide bridges follow: C41-C108, C158-C206, C248-C301, C344-C395, and C440-C486. Residues N188 and N256 are each glycosylated (N-linked (GlcNAc...) asparagine). Fibronectin type-III domains lie at 507 to 611 (SPHV…TTPA) and 623 to 718 (PLSP…TSGL). 2 N-linked (GlcNAc...) asparagine glycosylation sites follow: N513 and N524. Residues 606–626 (LPTTPAAPGLPPTEIPPPLSP) are disordered. Residues 613–626 (PGLPPTEIPPPLSP) are compositionally biased toward pro residues. A helical transmembrane segment spans residues 735-755 (VLAGVVGGVCFLGVAVLVSIL). At 756–1179 (AGCLLNRRRA…VPHPEQATLL (424 aa)) the chain is on the cytoplasmic side. Disordered regions lie at residues 767–919 (RRRR…PLPG), 940–988 (DWPP…VVGA), and 1015–1079 (AAPR…KRRN). Residues 785–800 (GKSAAPSALGSGSPDS) show a composition bias toward low complexity. S809 is subject to Phosphoserine. Composition is skewed to pro residues over residues 826-836 (TPSPHPDPPSS) and 906-919 (VAPP…PLPG). T972 carries the phosphothreonine modification. The PDZ-binding motif lies at 1177–1179 (TLL).

It belongs to the immunoglobulin superfamily. Turtle family. As to quaternary structure, interacts with MAGI2 and SHANK1.

The protein resides in the cell membrane. It is found in the synapse. Its function is as follows. Functions in dendrite outgrowth and synapse maturation. The sequence is that of Protein turtle homolog A (IGSF9) from Homo sapiens (Human).